Consider the following 284-residue polypeptide: Undecaprenyl-diphosphatase (284 aa).

The next 8 membrane-spanning stretches (helical) occupy residues 7–27, 44–64, 90–110, 116–136, 167–187, 197–217, 229–249, and 259–279; these read IILGVIEGITEWLPISSTGHL, EMFDVVIQLGAILSVVVLYFH, LWLKVLIAALPAAIIGLPLND, FYHFVPVAFMLIIYGVAFIVI, VLSLLPGTSRSGATIVGALLV, FTFFLGIPVMFGASFIKILHF, FGVLLVACIVAFGVSMVAIKF, and FTFFGKYRIVLGIILLIYAMF.

It belongs to the UppP family.

Its subcellular location is the cell membrane. It catalyses the reaction di-trans,octa-cis-undecaprenyl diphosphate + H2O = di-trans,octa-cis-undecaprenyl phosphate + phosphate + H(+). In terms of biological role, catalyzes the dephosphorylation of undecaprenyl diphosphate (UPP). Confers resistance to bacitracin. This chain is Undecaprenyl-diphosphatase, found in Lactococcus lactis subsp. lactis (strain IL1403) (Streptococcus lactis).